A 91-amino-acid polypeptide reads, in one-letter code: Histone H1, sperm (91 aa).

Residues 1-25 (PGSPQKRAASPRKSPRKGSPKKSPM) form a disordered region. Residues 9–20 (ASPRKSPRKGSP) are compositionally biased toward basic residues. Residues 18–91 (GSPKKSPMIR…TGATGRFRVG (74 aa)) enclose the H15 domain.

It belongs to the histone H1/H5 family.

The protein resides in the nucleus. It localises to the chromosome. In terms of biological role, histones H1 are necessary for the condensation of nucleosome chains into higher-order structures. The chain is Histone H1, sperm from Sphaerechinus granularis (Purple sea urchin).